The chain runs to 308 residues: Probable manganese-dependent inorganic pyrophosphatase (308 aa).

6 residues coordinate Mn(2+): H9, D13, D15, D75, H97, and D149.

It belongs to the PPase class C family. It depends on Mn(2+) as a cofactor.

Its subcellular location is the cytoplasm. The enzyme catalyses diphosphate + H2O = 2 phosphate + H(+). In Enterococcus faecalis (strain ATCC 700802 / V583), this protein is Probable manganese-dependent inorganic pyrophosphatase.